Reading from the N-terminus, the 697-residue chain is Elongation factor G 2 (697 aa).

The region spanning Ser-5 to Asn-280 is the tr-type G domain. Residues Ala-14–Thr-21, Asp-78–His-82, and Asn-132–Asp-135 contribute to the GTP site.

It belongs to the TRAFAC class translation factor GTPase superfamily. Classic translation factor GTPase family. EF-G/EF-2 subfamily.

It localises to the cytoplasm. Catalyzes the GTP-dependent ribosomal translocation step during translation elongation. During this step, the ribosome changes from the pre-translocational (PRE) to the post-translocational (POST) state as the newly formed A-site-bound peptidyl-tRNA and P-site-bound deacylated tRNA move to the P and E sites, respectively. Catalyzes the coordinated movement of the two tRNA molecules, the mRNA and conformational changes in the ribosome. The chain is Elongation factor G 2 from Shewanella sp. (strain MR-4).